Consider the following 1189-residue polypeptide: Tyrosine-protein phosphatase non-receptor type 14 (1189 aa).

Residues 21 to 306 form the FERM domain; the sequence is FVTRIRLLDS…TRHKFYKQNK (286 aa). Phosphoserine occurs at positions 314, 461, 486, 591, 593, 594, and 646. The tract at residues 744-775 is disordered; the sequence is ARIPNRPPPEYPGPRKSVSNGALRQDQGTPLP. A compositionally biased stretch (polar residues) spans 760–771; the sequence is SVSNGALRQDQG. A Phosphoserine modification is found at S833. A Tyrosine-protein phosphatase domain is found at 911 to 1182; the sequence is VFTEYEQIPN…KFVYQVLVQF (272 aa). Catalysis depends on C1123, which acts as the Phosphocysteine intermediate. Substrate-binding positions include 1123–1129 and Q1167; that span reads CSAGVGR.

Belongs to the protein-tyrosine phosphatase family. Non-receptor class subfamily. Interacts with FLT4; the interaction is enhanced by stimulation with VEGFC. Interacts (via PPxY motifs) with YAP1 (via WW domains); this interaction leads to the cytoplasmic sequestration of YAP1 and inhibits its transcriptional coactivator activity. Ubiquitinated by the ECS (Elongin BC-CUL2/5-SOCS-box protein)/LRR1 E3 ligase complex and subsequently targeted to proteasomal degradation. In terms of tissue distribution, thymus; in cells of both hematopoietic and non-hematopoietic origins.

It localises to the cytoplasm. It is found in the cytoskeleton. The protein resides in the nucleus. The catalysed reaction is O-phospho-L-tyrosyl-[protein] + H2O = L-tyrosyl-[protein] + phosphate. Functionally, protein tyrosine phosphatase which may play a role in the regulation of lymphangiogenesis, cell-cell adhesion, cell-matrix adhesion, cell migration, cell growth and also regulates TGF-beta gene expression, thereby modulating epithelial-mesenchymal transition. Mediates beta-catenin dephosphorylation at adhesion junctions. Acts as a negative regulator of the oncogenic property of YAP, a downstream target of the hippo pathway, in a cell density-dependent manner. May function as a tumor suppressor. This Mus musculus (Mouse) protein is Tyrosine-protein phosphatase non-receptor type 14 (Ptpn14).